Consider the following 392-residue polypeptide: Phospho-N-acetylmuramoyl-pentapeptide-transferase (392 aa).

The next 11 helical transmembrane spans lie at Tyr-24–Gly-44, Thr-76–Leu-96, Phe-100–Trp-120, Tyr-137–Glu-157, Phe-167–Val-187, Val-193–Ser-213, Gly-225–Thr-245, Ser-262–Phe-282, Val-289–Ile-309, Ile-314–Val-334, and Gln-369–Leu-389.

It belongs to the glycosyltransferase 4 family. MraY subfamily. It depends on Mg(2+) as a cofactor.

The protein localises to the cell inner membrane. The catalysed reaction is UDP-N-acetyl-alpha-D-muramoyl-L-alanyl-gamma-D-glutamyl-meso-2,6-diaminopimeloyl-D-alanyl-D-alanine + di-trans,octa-cis-undecaprenyl phosphate = di-trans,octa-cis-undecaprenyl diphospho-N-acetyl-alpha-D-muramoyl-L-alanyl-D-glutamyl-meso-2,6-diaminopimeloyl-D-alanyl-D-alanine + UMP. It functions in the pathway cell wall biogenesis; peptidoglycan biosynthesis. Functionally, catalyzes the initial step of the lipid cycle reactions in the biosynthesis of the cell wall peptidoglycan: transfers peptidoglycan precursor phospho-MurNAc-pentapeptide from UDP-MurNAc-pentapeptide onto the lipid carrier undecaprenyl phosphate, yielding undecaprenyl-pyrophosphoryl-MurNAc-pentapeptide, known as lipid I. The protein is Phospho-N-acetylmuramoyl-pentapeptide-transferase of Acidovorax ebreus (strain TPSY) (Diaphorobacter sp. (strain TPSY)).